Consider the following 369-residue polypeptide: Homoserine O-succinyltransferase (369 aa).

The disordered stretch occupies residues 1–21; the sequence is MVRIVPSARRTRAPAKLDGRS. One can recognise an AB hydrolase-1 domain in the interval 86–350; sequence VVFVAGGISA…PFGHDAFLKE (265 aa). Residues 92–95 are important for substrate specificity; it reads GISA. The Nucleophile role is filled by Ser-172. Arg-233 is a binding site for substrate. Active-site residues include Asp-314 and His-344. Asp-345 serves as a coordination point for substrate.

It belongs to the AB hydrolase superfamily. MetX family. As to quaternary structure, homodimer.

It localises to the cytoplasm. The enzyme catalyses L-homoserine + succinyl-CoA = O-succinyl-L-homoserine + CoA. The protein operates within amino-acid biosynthesis; L-methionine biosynthesis via de novo pathway; O-succinyl-L-homoserine from L-homoserine: step 1/1. In terms of biological role, transfers a succinyl group from succinyl-CoA to L-homoserine, forming succinyl-L-homoserine. This is Homoserine O-succinyltransferase from Xanthomonas campestris pv. campestris (strain ATCC 33913 / DSM 3586 / NCPPB 528 / LMG 568 / P 25).